The following is a 362-amino-acid chain: sn-glycerol-3-phosphate import ATP-binding protein UgpC (362 aa).

The ABC transporter domain maps to leucine 4 to isoleucine 235. Position 37-44 (glycine 37–serine 44) interacts with ATP.

The protein belongs to the ABC transporter superfamily. sn-glycerol-3-phosphate importer (TC 3.A.1.1.3) family. In terms of assembly, the complex is composed of two ATP-binding proteins (UgpC), two transmembrane proteins (UgpA and UgpE) and a solute-binding protein (UgpB).

The protein resides in the cell inner membrane. It carries out the reaction sn-glycerol 3-phosphate(out) + ATP + H2O = sn-glycerol 3-phosphate(in) + ADP + phosphate + H(+). Part of the ABC transporter complex UgpBAEC involved in sn-glycerol-3-phosphate (G3P) import. Responsible for energy coupling to the transport system. The chain is sn-glycerol-3-phosphate import ATP-binding protein UgpC from Paraburkholderia xenovorans (strain LB400).